The chain runs to 653 residues: MTSLTGLALLLCVLASQSWAARVQKTLRIAWEKGAPNGQSREMIFTNGVFPGPELIFDEDDDVEITVHNDMNRNTTVHWHGIAQEGTPWADGVIGLSQQPIRPGESFVYRFKASPPGTHWYHSHERMTLVDGLHGAFFIRPKRDMKDLWSKISNDPKDIDAMSKAALDPKLMVLSDWSRFTSEEYWKAIEDSKLLLFCVDSILLNGHGEVYCPPQEFLVNQTQWGPQHFTFPDQNVTDKGCFPAVEEGIQGPWVNQSLPEKIPAHIQSGCVPSAGSNYTVEVDPADGWVSMNFIAAASNKQVDFSIDEHPMWIYEVDGNYVQPHKFVAAAITAGERFSVMVKLDKQPGRYTIRLPDSGATQVISGFANMVYKGAEHVSPPTKPYVTYGGLSGRPETDTESYAPYNISADYMPPWPANPPAATADEEYLLVMGRAGSSFQYTMNTNYLYPMDFKADRPLLHYPNQTVGTEDEKLVIRTKNGSWVDLILQVAVLPGDGAAFEHMMHKHGSKTWRIGNGAGVWKYKSVAEAIAAEPESFNLKDPGLRDSWLTMFSPVPAGGYWSVFRYQVTNPGPWLFHCHFELHAMGGMSIALLDGVDVWPQVPEEYAVRHHPSQGTQTLAATPNASKPWYNGMLNFMQAVLGILPGQGSEELRR.

Positions 1–20 are cleaved as a signal peptide; it reads MTSLTGLALLLCVLASQSWA. 2 consecutive Plastocyanin-like domains span residues 31-143 and 173-362; these read WEKG…RPKR and VLSD…ATQV. Residues asparagine 74, asparagine 220, asparagine 235, asparagine 255, asparagine 277, asparagine 405, asparagine 463, and asparagine 479 are each glycosylated (N-linked (GlcNAc...) asparagine). The Plastocyanin-like 3 domain occupies 463–594; sequence NQTVGTEDEK…GGMSIALLDG (132 aa). Residues histidine 501, histidine 504, histidine 506, histidine 576, cysteine 577, histidine 578, and histidine 582 each contribute to the Cu cation site. Residue asparagine 623 is glycosylated (N-linked (GlcNAc...) asparagine).

The protein belongs to the multicopper oxidase family.

The enzyme catalyses 4 norrubrofusarin + O2 = 2 ustilaginoidin A + 2 H2O. The protein operates within secondary metabolite biosynthesis. In terms of biological role, laccase; part of the gene cluster that mediates the biosynthesis of ustilaginoidins, dimeric gamma-naphthopyrones isolated from different fungal species. The first step in the biosynthesis of ustilaginoidins is the production of gamma-naphthopyrone precursor YWA1 by the non-reducing polyketide synthase ustP, via condensation of one acetyl-CoA starter unit with 6 malonyl-CoA units. YWA1 is then probably substrate of the ustZ to yield norrubrofusarin via a dehydration reaction. A key enzyme in the biosynthetic pathway is the laccase ustL, which catalyzes the oxidative dimerization of norrubrofusarin to ustilaginoidin A. It can produce the M- and P-atropisomers in varying amounts, depending on the reaction conditions. For the biosynthesis of 3-methylustilaginoid in derivatives such as chaetochromin A, a methylated derivative of YWA1 is required. The C-methylation is considered to be catalyzed by ustM, the phosphopantetheine attachment site of which indicates that it acts on the growing polyketide chain before release of the product. For the biosynthesis of chaetochromin A, it is assumed that saturation of the D2 double bond takes place before dimerization, and is probably catalyzed by an external reductase because no candidate gene was identified within the cluster. This is Laccase ustL from Ustilaginoidea virens (Rice false smut fungus).